A 1382-amino-acid polypeptide reads, in one-letter code: Hepatocyte growth factor receptor (1382 aa).

The N-terminal stretch at Met-1–Glu-24 is a signal peptide. At Glu-25–Thr-933 the chain is on the extracellular side. In terms of domain architecture, Sema spans Arg-27–Leu-516. 3 N-linked (GlcNAc...) asparagine glycosylation sites follow: Asn-38, Asn-49, and Asn-99. Intrachain disulfides connect Cys-94–Cys-100, Cys-97–Cys-160, Cys-133–Cys-141, and Cys-173–Cys-176. 2 N-linked (GlcNAc...) asparagine glycosylation sites follow: Asn-203 and Asn-359. Disulfide bonds link Cys-299/Cys-364 and Cys-386/Cys-398. 4 N-linked (GlcNAc...) asparagine glycosylation sites follow: Asn-400, Asn-406, Asn-450, and Asn-495. Intrachain disulfides connect Cys-521/Cys-539, Cys-527/Cys-562, Cys-530/Cys-546, and Cys-542/Cys-552. IPT/TIG domains are found at residues Pro-564–Val-656, Pro-658–Lys-740, and Pro-743–Val-837. O-linked (Man) threonine glycosylation is present at Thr-583. Asn-608, Asn-616, and Asn-636 each carry an N-linked (GlcNAc...) asparagine glycan. 2 O-linked (Man) threonine glycosylation sites follow: Thr-677 and Thr-762. Asn-769, Asn-786, Asn-880, and Asn-931 each carry an N-linked (GlcNAc...) asparagine glycan. The helical transmembrane segment at Gly-934–Met-956 threads the bilayer. Residues Lys-957–Thr-1382 lie on the Cytoplasmic side of the membrane. At Ser-967 the chain carries Phosphoserine. Thr-978 is modified (phosphothreonine). Residues Ser-991, Ser-998, and Ser-1001 each carry the phosphoserine modification. The residue at position 1004 (Tyr-1004) is a Phosphotyrosine. The Protein kinase domain maps to Val-1079 to Ile-1346. ATP-binding positions include Ile-1085–Val-1093 and Lys-1111. Asp-1205 serves as the catalytic Proton acceptor. An interaction with RANBP9 region spans residues Leu-1213 to Thr-1382. Residue Tyr-1231 is modified to Phosphotyrosine. A phosphotyrosine; by autocatalysis mark is found at Tyr-1235 and Tyr-1236. Residue Thr-1290 is modified to Phosphothreonine. The interval Trp-1321 to Val-1360 is interaction with MUC20. Residues Tyr-1350 and Tyr-1357 each carry the phosphotyrosine; by autocatalysis modification. A Phosphotyrosine modification is found at Tyr-1366.

Belongs to the protein kinase superfamily. Tyr protein kinase family. In terms of assembly, heterodimer made of an alpha chain (50 kDa) and a beta chain (145 kDa) which are disulfide linked. Binds PLXNB1. Interacts when phosphorylated with downstream effectors including STAT3, PIK3R1, SRC, PCLG1, GRB2 and GAB1. Interacts with SPSB1, SPSB2 and SPSB4. Interacts with INPP5D/SHIP1. When phosphorylated at Tyr-1357, interacts with INPPL1/SHIP2. Interacts with RANBP9 and RANBP10, as well as SPSB1, SPSB2, SPSB3 and SPSB4. SPSB1 binding occurs in the presence and in the absence of HGF, however HGF treatment has a positive effect on this interaction. Interacts with MUC20; prevents interaction with GRB2 and suppresses hepatocyte growth factor-induced cell proliferation. Interacts with GRB10. Interacts with PTPN1 and PTPN2. Interacts with HSP90AA1 and HSP90AB1; the interaction suppresses MET kinase activity. Interacts with tensin TNS3. Interacts (when phosphorylated) with tensin TNS4 (via SH2 domain); the interaction increases MET protein stability by inhibiting MET endocytosis and subsequent lysosomal degradation. Post-translationally, autophosphorylated in response to ligand binding on Tyr-1235 and Tyr-1236 in the kinase domain leading to further phosphorylation of Tyr-1350 and Tyr-1357 in the C-terminal multifunctional docking site. Dephosphorylated by PTPRJ at Tyr-1350 and Tyr-1366. Dephosphorylated by PTPN1 and PTPN2. In terms of processing, ubiquitinated. Ubiquitination by CBL regulates the receptor stability and activity through proteasomal degradation. O-mannosylation of IPT/TIG domains by TMEM260 is required for protein maturation. O-mannosylated residues are composed of single mannose glycans that are not elongated or modified.

It is found in the membrane. The enzyme catalyses L-tyrosyl-[protein] + ATP = O-phospho-L-tyrosyl-[protein] + ADP + H(+). With respect to regulation, in its inactive state, the C-terminal tail interacts with the catalytic domain and inhibits the kinase activity. Upon ligand binding, the C-terminal tail is displaced and becomes phosphorylated, thus increasing the kinase activity. In terms of biological role, receptor tyrosine kinase that transduces signals from the extracellular matrix into the cytoplasm by binding to hepatocyte growth factor/HGF ligand. Regulates many physiological processes including proliferation, scattering, morphogenesis and survival. Ligand binding at the cell surface induces autophosphorylation of MET on its intracellular domain that provides docking sites for downstream signaling molecules. Following activation by ligand, interacts with the PI3-kinase subunit PIK3R1, PLCG1, SRC, GRB2, STAT3 or the adapter GAB1. Recruitment of these downstream effectors by MET leads to the activation of several signaling cascades including the RAS-ERK, PI3 kinase-AKT, or PLCgamma-PKC. The RAS-ERK activation is associated with the morphogenetic effects while PI3K/AKT coordinates prosurvival effects. During embryonic development, MET signaling plays a role in gastrulation, development and migration of muscles and neuronal precursors, angiogenesis and kidney formation. In adults, participates in wound healing as well as organ regeneration and tissue remodeling. Also promotes differentiation and proliferation of hematopoietic cells. This chain is Hepatocyte growth factor receptor (MET), found in Ornithorhynchus anatinus (Duckbill platypus).